The primary structure comprises 535 residues: WD repeat-containing protein 25 (535 aa).

Disordered regions lie at residues 1–108 (MASL…PRPS) and 141–160 (DQSTFESTAGNASSSQRKRG). Polar residues predominate over residues 141–155 (DQSTFESTAGNASSS). 7 WD repeats span residues 235 to 277 (GHRG…HCLQ), 281 to 320 (VHSEAVRAARWSPCGRRILSGGFDFALHLTDLETGTQVFS), 321 to 362 (GQSD…VVKG), 365 to 411 (ATIQ…KISN), 415 to 454 (HERYTCPSLALHPREPVFLAQTNGNYLALFSSVWPYRMSR), 460 to 501 (GHKV…RACT), and 504 to 535 (GHTQACLGTTYHPVLPSVLGTCSWGGDIKIWH).

In Mus musculus (Mouse), this protein is WD repeat-containing protein 25 (Wdr25).